The following is a 601-amino-acid chain: Sestrin homolog (601 aa).

A compositionally biased stretch (polar residues) spans methionine 1–glutamine 11. The segment at methionine 1–asparagine 58 is disordered. The N-linked (GlcNAc...) asparagine glycan is linked to asparagine 20. Positions serine 21–serine 32 are enriched in low complexity. Asparagine 322 and asparagine 330 each carry an N-linked (GlcNAc...) asparagine glycan. Residues arginine 355 to serine 425 are disordered. Over residues leucine 368 to glycine 379 the composition is skewed to basic and acidic residues. A compositionally biased stretch (low complexity) spans aspartate 380–serine 425. 5 N-linked (GlcNAc...) asparagine glycosylation sites follow: asparagine 387, asparagine 388, asparagine 406, asparagine 438, and asparagine 499.

This sequence belongs to the sestrin family.

The protein resides in the nucleus. Its subcellular location is the cytoplasm. Functionally, may function as a negative feedback regulator of TOR function. This Dictyostelium discoideum (Social amoeba) protein is Sestrin homolog.